Here is a 291-residue protein sequence, read N- to C-terminus: Probable 2-(5''-triphosphoribosyl)-3'-dephosphocoenzyme-A synthase (291 aa).

It belongs to the CitG/MdcB family.

It carries out the reaction 3'-dephospho-CoA + ATP = 2'-(5''-triphospho-alpha-D-ribosyl)-3'-dephospho-CoA + adenine. Its function is as follows. Involved in the formation of 2-(5''-phosphoribosyl)-3'-dephosphocoenzyme-A, the prosthetic group of the acyl-carrier protein of the malonate decarboxylase. The protein is Probable 2-(5''-triphosphoribosyl)-3'-dephosphocoenzyme-A synthase of Pseudomonas savastanoi pv. phaseolicola (strain 1448A / Race 6) (Pseudomonas syringae pv. phaseolicola (strain 1448A / Race 6)).